Here is a 64-residue protein sequence, read N- to C-terminus: DNA-binding protein 7b (64 aa).

This sequence belongs to the 7 kDa DNA-binding/endoribonuclease P2 family. Monomer.

The protein resides in the cytoplasm. In terms of biological role, can constrain negative DNA supercoils. May be involved in maintaining the integrity of the genome at high temperature. In Saccharolobus islandicus (strain HVE10/4) (Sulfolobus islandicus), this protein is DNA-binding protein 7b.